Here is a 33-residue protein sequence, read N- to C-terminus: Gastrin (33 aa).

Positions 1-21 (ELEPQGPPHLGTDLSKKQGPW) are disordered. At glutamine 18 the chain carries Pyrrolidone carboxylic acid. Tyrosine 28 bears the Sulfotyrosine mark. Residue phenylalanine 33 is modified to Phenylalanine amide.

Belongs to the gastrin/cholecystokinin family.

It is found in the secreted. Functionally, gastrin stimulates the stomach mucosa to produce and secrete hydrochloric acid and the pancreas to secrete its digestive enzymes. It also stimulates smooth muscle contraction and increases blood circulation and water secretion in the stomach and intestine. The sequence is that of Gastrin (GAST) from Chinchilla chinchilla (Short-tailed chinchilla).